Reading from the N-terminus, the 793-residue chain is Acetyl-CoA decarbonylase/synthase complex subunit alpha (793 aa).

Residues Cys-55, Cys-58, Cys-63, and Cys-73 each contribute to the [4Fe-4S] cluster site. His-96 provides a ligand contact to CO. Positions 229, 257, and 309 each coordinate [Ni-4Fe-4S] cluster. 2 4Fe-4S ferredoxin-type domains span residues 393–422 and 432–461; these read EQQF…ISEM and EPFS…LKLY. Residues Cys-403, Cys-406, Cys-409, Cys-413, Cys-441, Cys-444, Cys-447, and Cys-451 each coordinate [4Fe-4S] cluster. 3 residues coordinate [Ni-4Fe-4S] cluster: Cys-509, Cys-538, and Cys-573.

Belongs to the Ni-containing carbon monoxide dehydrogenase family. Heterotetramer of two alpha and two epsilon subunits. The ACDS complex is made up of alpha, epsilon, beta, gamma and delta subunits with a probable stoichiometry of (alpha(2)epsilon(2))(4)-beta(8)-(gamma(1)delta(1))(8). [4Fe-4S] cluster is required as a cofactor. [Ni-4Fe-4S] cluster serves as cofactor.

It catalyses the reaction CO + 2 oxidized [2Fe-2S]-[ferredoxin] + H2O = 2 reduced [2Fe-2S]-[ferredoxin] + CO2 + 2 H(+). Its function is as follows. Part of the ACDS complex that catalyzes the reversible cleavage of acetyl-CoA, allowing autotrophic growth from CO(2). The alpha-epsilon subcomponent functions as a carbon monoxide dehydrogenase. The sequence is that of Acetyl-CoA decarbonylase/synthase complex subunit alpha from Methanothrix soehngenii (Methanosaeta concilii).